A 539-amino-acid chain; its full sequence is MTSNRSTRSSTKREEVSKNGVEKRELDESDVMKNGKKPVKRAKVSSLPKPVRVPGSAKRINKIPELPTERLNVYVFGSGSMNELGMGEEEMDVVYRPRLNPILSTDKVGVVDLAVGGMHSAALSHDGRVYTWGVNDDYALGRLTKDQKDENGDKVDNDLLEGTPSKVEGALSHLRVTKVICSDNLTAAITDNGCCFTWGTFRCSDGVLGYSDSQKRTAEPTQMRLPEICQLATGTDHIIALTTTGKVYTWGNGQQFQLGRRMLERRRLQGLTPQPLALKNIISVGAGSYHSFAIDNKGRVYAWGLNITRQCGIEVEDEEEGAVITKPTLVDALEGYNVKSITGGEHHTLALLEDGRVLAWGRDDRHQLGIPDNALPETVVKDEKGNNYYLSTPTIIPGLTNVIQVVCGTHHNLAVTSDGKVYSWGSAENYEVGQGDNDEDVAVPTLVRSKAIKEVAIRVAGAGGQFSIIAGIPNASEEPVANGIKSEPENEKKLKTEETSKTDDSPVTDAKPDVTSNGEPSTATSESKDSVLEPSSTTA.

Residues 1–53 are disordered; it reads MTSNRSTRSSTKREEVSKNGVEKRELDESDVMKNGKKPVKRAKVSSLPKPVRV. A compositionally biased stretch (basic and acidic residues) spans 11 to 33; it reads TKREEVSKNGVEKRELDESDVMK. The segment covering 34-43 has biased composition (basic residues); sequence NGKKPVKRAK. RCC1 repeat units follow at residues 70-125, 127-191, 192-243, 244-296, 298-353, 354-417, and 419-472; these read RLNV…ALSH, GRVY…AITD, NGCC…ALTT, TGKV…AIDN, GRVY…ALLE, DGRV…AVTS, and GKVY…IAGI. The disordered stretch occupies residues 478 to 539; the sequence is EPVANGIKSE…SVLEPSSTTA (62 aa). Residues 486–504 show a composition bias toward basic and acidic residues; the sequence is SEPENEKKLKTEETSKTDD. Residues 514–525 show a composition bias toward polar residues; the sequence is VTSNGEPSTATS.

As to quaternary structure, oligomer of dis3, pim1 and spi1. Interacts with ned1.

The protein localises to the nucleus. Functionally, promotes the exchange of Ran(spi1)-bound GDP by GTP. Involved in the control of mitosis. Regulates a variety of nuclear events, including mitotic check-point, chromosome decondensation and mRNA processing/transport. The chain is Protein pim1 (pim1) from Schizosaccharomyces pombe (strain 972 / ATCC 24843) (Fission yeast).